We begin with the raw amino-acid sequence, 167 residues long: Shikimate kinase (167 aa).

12–17 (GSGKTT) contacts ATP. Threonine 16 is a Mg(2+) binding site. Substrate-binding residues include aspartate 34, arginine 58, and glycine 80. An ATP-binding site is contributed by arginine 117. Arginine 135 contacts substrate. Arginine 152 is an ATP binding site.

The protein belongs to the shikimate kinase family. Monomer. Mg(2+) is required as a cofactor.

Its subcellular location is the cytoplasm. The catalysed reaction is shikimate + ATP = 3-phosphoshikimate + ADP + H(+). Its pathway is metabolic intermediate biosynthesis; chorismate biosynthesis; chorismate from D-erythrose 4-phosphate and phosphoenolpyruvate: step 5/7. Its function is as follows. Catalyzes the specific phosphorylation of the 3-hydroxyl group of shikimic acid using ATP as a cosubstrate. This chain is Shikimate kinase, found in Salinispora arenicola (strain CNS-205).